The chain runs to 524 residues: ORC1-type DNA replication protein 4 (524 aa).

Positions 1–23 (MTDKSNNPAPASDPSTTETSNDA) are enriched in polar residues. Positions 1–67 (MTDKSNNPAP…DDPSDEASRG (67 aa)) are disordered. Residues 128–132 (TGKTA), Y325, and R337 each bind ATP.

It belongs to the CDC6/cdc18 family.

In terms of biological role, involved in regulation of DNA replication. The sequence is that of ORC1-type DNA replication protein 4 (cdc6d) from Haloarcula marismortui (strain ATCC 43049 / DSM 3752 / JCM 8966 / VKM B-1809) (Halobacterium marismortui).